The sequence spans 300 residues: D-alanine--D-alanine ligase (300 aa).

The ATP-grasp domain maps to 99 to 293 (KKILKYANIN…FAELLNSIVK (195 aa)). ATP is bound at residue 126–181 (IEKIGYPVFVKPNSGGSSVATNLVKDKEGIKEAVELALKYDKEVMIENYTKGEEIT). Aspartate 248, glutamate 260, and asparagine 262 together coordinate Mg(2+).

Belongs to the D-alanine--D-alanine ligase family. Mg(2+) serves as cofactor. The cofactor is Mn(2+).

It is found in the cytoplasm. It carries out the reaction 2 D-alanine + ATP = D-alanyl-D-alanine + ADP + phosphate + H(+). Its pathway is cell wall biogenesis; peptidoglycan biosynthesis. Functionally, cell wall formation. The sequence is that of D-alanine--D-alanine ligase from Clostridium botulinum (strain Langeland / NCTC 10281 / Type F).